Reading from the N-terminus, the 252-residue chain is O-methyltransferase hkm8 (252 aa).

S-adenosyl-L-methionine is bound by residues Glu73, Gly75 to Thr76, Ser81, and Asp100.

It belongs to the class I-like SAM-binding methyltransferase superfamily. Cation-dependent O-methyltransferase family.

It functions in the pathway secondary metabolite biosynthesis. Functionally, O-methyltransferase; part of the gene cluster that mediates the biosynthesis of hancockiamides, an unusual new family of N-cinnamoylated piperazines. The NRPS hkm10 and the NmrA-like reductase hkm9 are proposed to convert two molecules of L-Phe to the intermediary piperazine called xenocockiamide A. Xenocockiamide A is then converted to hancockiamide D via a series of hydroxylations and O-methylations. The tyrosinase hkm6 may catalyze an aromatic hydroxylation, then the 2-oxoglutarate-dependent Fe(II) dioxygenase hkm4 and the FAD-dependent phenol hydroxylase hkm7 may catalyze consecutive hydroxylations to install 2 more hydroxy groups, and the methyltransferase hkm8 probably catalyzes two methylations using 2 molecules of S-adenosyl-L-methionine (SAM). The NRPS hkm11 activates and transfers trans-cinnamate supplied by the PAL hkm12 to hancockiamide D and produces hancockiamide A. NRPS Hkm11 has the flexibility to tolerate the bulky hancockiamide G as a substrate and the absence of the acetyl-transferase hkm3 opens up the opportunity for hkm11 to introduce a second N-cinnamoyl moiety. The cytochrome P450 monooxygenase hkm5 catalyzes the methylenedioxy bridge formation, converting hancockiamide A into hancockiamide G. Hkm5 can also convert hancockiamide B into hancockiamide C, and hancockiamide D into hancockiamide H. The N-acetyltransferase hkm3 finally transfers an acetyl group to 1-N of piperazine, converting hancockiamide A into hancockiamide B and hancockiamide G into hancockiamide C. This is O-methyltransferase hkm8 from Aspergillus hancockii.